The following is a 248-amino-acid chain: Triosephosphate isomerase (248 aa).

Substrate-binding residues include N10 and K12. Residue H95 is the Electrophile of the active site. The active-site Proton acceptor is E165.

The protein belongs to the triosephosphate isomerase family. Homodimer.

The enzyme catalyses D-glyceraldehyde 3-phosphate = dihydroxyacetone phosphate. The protein operates within carbohydrate biosynthesis; gluconeogenesis. It participates in carbohydrate degradation; glycolysis; D-glyceraldehyde 3-phosphate from glycerone phosphate: step 1/1. The protein is Triosephosphate isomerase (TPI1) of Debaryomyces hansenii (strain ATCC 36239 / CBS 767 / BCRC 21394 / JCM 1990 / NBRC 0083 / IGC 2968) (Yeast).